A 2223-amino-acid polypeptide reads, in one-letter code: Protein Ycf2 (2223 aa).

Residue 1576-1583 participates in ATP binding; it reads GSIGTGRS.

Belongs to the Ycf2 family.

The protein resides in the plastid. Its subcellular location is the chloroplast stroma. Probable ATPase of unknown function. Its presence in a non-photosynthetic plant (Epifagus virginiana) and experiments in tobacco indicate that it has an essential function which is probably not related to photosynthesis. In Silene latifolia (White campion), this protein is Protein Ycf2.